Consider the following 59-residue polypeptide: Insertion element IS986 uncharacterized 6.6 kDa protein (59 aa).

The disordered stretch occupies residues 1–26 (MRKWVRQAQVDAGARPGTTTEESAEI).

It belongs to the transposase 8 family.

This is Insertion element IS986 uncharacterized 6.6 kDa protein from Mycobacterium tuberculosis.